The sequence spans 559 residues: Paxillin (559 aa).

The short motif at 3-15 (DLDALLADLESTT) is the LD motif 1 element. Residues 17–139 (HISKRPVFLT…SPTMTSTSLG (123 aa)) form a disordered region. Tyrosine 31 is modified (phosphotyrosine). The segment covering 45-54 (VPPPVPPPPS) has biased composition (pro residues). Positions 79-98 (QQPQSQSPIYSSSAKSSSAS) are enriched in low complexity. Tyrosine 118 is subject to Phosphotyrosine; by FAK1. Residues 121–137 (PNKQKSAEPSPTMTSTS) show a composition bias toward polar residues. Residues 144-156 (ELDRLLLELNAVQ) carry the LD motif 2 motif. Disordered stretches follow at residues 158-213 (NPPS…GIED) and 225-262 (LESS…SASS). Residues 217–229 (SVESLLDELESSV) carry the LD motif 3 motif. Polar residues predominate over residues 237 to 262 (TVSQGEVSSPQRVNASQQQTRISASS). A required for binding to PARVA and ILK region spans residues 263 to 282 (ATRELDELMASLSDFKFMAQ). Short sequence motifs (LD motif) lie at residues 266-277 (ELDELMASLSDF) and 301-313 (QLDT…QSDL). The disordered stretch occupies residues 281 to 301 (AQGKAGGSSSPPSTTPKPGSQ). LIM zinc-binding domains follow at residues 326–376 (CGAC…CEKD), 385–435 (CYYC…CRKD), 444–494 (CGGC…CEVH), and 503–553 (CSGC…CQNC).

In terms of assembly, interacts (via LD motif 4) with PARVA/PARVIN and ILK. Post-translationally, phosphorylated on tyrosine residues during integrin-mediated cell adhesion, embryonic development, fibroblast transformation and following stimulation of cells by mitogens.

Its subcellular location is the cytoplasm. The protein resides in the cytoskeleton. The protein localises to the cell junction. It localises to the focal adhesion. It is found in the cell cortex. Functionally, cytoskeletal protein involved in actin-membrane attachment at sites of cell adhesion to the extracellular matrix (focal adhesion). Binds in vitro to vinculin as well as to the SH3 domain of c-SRC and, when tyrosine phosphorylated, to the SH2 domain of v-CRK. The chain is Paxillin (PXN) from Gallus gallus (Chicken).